The primary structure comprises 773 residues: Mitogen-activated protein kinase kinase kinase 9 (773 aa).

A compositionally biased stretch (basic and acidic residues) spans Met1 to Asp14. A disordered region spans residues Met1–Ser35. A compositionally biased stretch (low complexity) spans Ser21–Ser35. Residues Ser79 and Ser150 each carry the phosphoserine modification. Residues Phe100–Ser493 are regulatory region. Ser365 bears the Phosphoserine; by MAPK4 mark. The disordered stretch occupies residues Glu426–Glu455. Residues Gly440–Asp449 show a composition bias toward acidic residues. The region spanning Trp501–Val755 is the Protein kinase domain. ATP is bound by residues Leu507–Val515 and Lys529. Residue Asp624 is the Proton acceptor of the active site. Ser768 carries the phosphoserine modification.

Belongs to the protein kinase superfamily. STE Ser/Thr protein kinase family. MAP kinase kinase kinase subfamily. In terms of assembly, interacts with MPK4. Post-translationally, phosphorylated by MPK4 upon treatment with flg22. As to expression, expressed at least in rosette leaves (at protein level).

It catalyses the reaction L-seryl-[protein] + ATP = O-phospho-L-seryl-[protein] + ADP + H(+). The catalysed reaction is L-threonyl-[protein] + ATP = O-phospho-L-threonyl-[protein] + ADP + H(+). Functionally, triggers SUMM2-mediated immune responses, including cell death and defense responses. Probably inhibited by the MEKK1-MKK1/ MKK2-MPK4 kinase cascade to adjust plant defense. Seems to contribute in transducing external glutamate (L-Glu) signal that elicits large-scale changes in root architecture. The protein is Mitogen-activated protein kinase kinase kinase 9 of Arabidopsis thaliana (Mouse-ear cress).